A 304-amino-acid chain; its full sequence is Transmembrane protein 178A (304 aa).

Positions 1-25 are cleaved as a signal peptide; it reads MESRGLVTAVSLTLSICSLLLLVTA. At 26-186 the chain is on the extracellular side; it reads IFTDHWYETD…LLHLRRITAG (161 aa). Residue Asn-165 is glycosylated (N-linked (GlcNAc...) asparagine). Residues 187–207 form a helical membrane-spanning segment; it reads FLGMAAAVLLCGCIVAAISFF. Topologically, residues 208 to 215 are cytoplasmic; that stretch reads WEESLTQH. The chain crosses the membrane as a helical span at residues 216–236; it reads VAGLLFLMTGIFCTISLCTYA. Topologically, residues 237-267 are extracellular; it reads ASVAYELNRQPKFIYGLPSDVEHGYSWSLFC. The helical transmembrane segment at 268-288 threads the bilayer; sequence AWCSLGLIVAAGCLCTAYPFI. Topologically, residues 289-304 are cytoplasmic; sequence SRTKILHLKFARDSCV.

Belongs to the TMEM178 family.

It localises to the endoplasmic reticulum membrane. Functionally, may act as a negative regulator of osteoclast differentiation. The chain is Transmembrane protein 178A (tmem178a) from Xenopus laevis (African clawed frog).